Here is a 618-residue protein sequence, read N- to C-terminus: Glucose starvation modulator protein 1 (618 aa).

The segment at residues 20-48 (CEFCHTKHIQCDVGRPCQNCLKRNIGKFC) is a DNA-binding region (zn(2)-C6 fungal-type). The tract at residues 325–352 (ANANTHPSHNAKLESECDSSSHSDADLE) is disordered. Over residues 335–352 (AKLESECDSSSHSDADLE) the composition is skewed to basic and acidic residues. The PAS domain occupies 466–538 (LLDLENMAKL…QIFNELLAFG (73 aa)).

Belongs to the ERT1/acuK family.

It localises to the nucleus. Its function is as follows. Transcription factor which regulates nonfermentable carbon utilization. Binds specifically to 5'-CGGN(8)CGG-3' and 5'-CGGN(9)CGG-3' sequences in the promoter region. The polypeptide is Glucose starvation modulator protein 1 (GSM1) (Saccharomyces cerevisiae (strain YJM789) (Baker's yeast)).